We begin with the raw amino-acid sequence, 141 residues long: Nucleoside diphosphate kinase (141 aa).

ATP is bound by residues K11, F59, R87, T93, R104, and N114. H117 serves as the catalytic Pros-phosphohistidine intermediate.

The protein belongs to the NDK family. As to quaternary structure, homotetramer. Mg(2+) is required as a cofactor.

Its subcellular location is the cytoplasm. The catalysed reaction is a 2'-deoxyribonucleoside 5'-diphosphate + ATP = a 2'-deoxyribonucleoside 5'-triphosphate + ADP. It catalyses the reaction a ribonucleoside 5'-diphosphate + ATP = a ribonucleoside 5'-triphosphate + ADP. Major role in the synthesis of nucleoside triphosphates other than ATP. The ATP gamma phosphate is transferred to the NDP beta phosphate via a ping-pong mechanism, using a phosphorylated active-site intermediate. This chain is Nucleoside diphosphate kinase, found in Cupriavidus taiwanensis (strain DSM 17343 / BCRC 17206 / CCUG 44338 / CIP 107171 / LMG 19424 / R1) (Ralstonia taiwanensis (strain LMG 19424)).